We begin with the raw amino-acid sequence, 184 residues long: MAVFVLVMILLAMAGHSSGTWCVCKEGLSEAMLQKTLDYACGAGADCGPIHQTGPCFNPNTVKSHCSYAVNSFFQKKGQSLGTCDFAGTATFSASDPSYTTCPFPASASGSGTTTPVTTTPSTRVPTTTNTRPYTITPSTGGGLGIPSGINPDYTDPSFGFKLQSPRFGFIVLFTLFLPFYLFS.

An N-terminal signal peptide occupies residues 1–19 (MAVFVLVMILLAMAGHSSG). Cys22 and Cys84 form a disulfide bridge. The interval 109 to 146 (SGSGTTTPVTTTPSTRVPTTTNTRPYTITPSTGGGLGI) is disordered. The segment covering 113-139 (TTTPVTTTPSTRVPTTTNTRPYTITPS) has biased composition (low complexity). The GPI-anchor amidated serine moiety is linked to residue Ser158. A propeptide spans 159–184 (FGFKLQSPRFGFIVLFTLFLPFYLFS) (removed in mature form).

Contains two additional disulfide bonds. As to expression, expressed in the shoot apical region and in young leaves but also detected in the laminar and vasculature of mature leaves.

The protein resides in the cell membrane. It is found in the cell junction. Its subcellular location is the plasmodesma. The sequence is that of PLASMODESMATA CALLOSE-BINDING PROTEIN 3 (PDCB3) from Arabidopsis thaliana (Mouse-ear cress).